The following is a 126-amino-acid chain: Protein C10 (126 aa).

Position 2 is an N-acetylalanine (Ala2).

The protein belongs to the UPF0456 family. As to expression, ubiquitously expressed, with higher expression in lung.

Its subcellular location is the cytoplasm. Its function is as follows. In brain, may be required for corpus callosum development. The polypeptide is Protein C10 (Grcc10) (Mus musculus (Mouse)).